A 482-amino-acid polypeptide reads, in one-letter code: Probable cytosol aminopeptidase (482 aa).

Mn(2+)-binding residues include lysine 251 and aspartate 256. Residue lysine 263 is part of the active site. Residues aspartate 274, aspartate 333, and glutamate 335 each coordinate Mn(2+). The active site involves arginine 337.

It belongs to the peptidase M17 family. Mn(2+) is required as a cofactor.

It localises to the cytoplasm. The catalysed reaction is Release of an N-terminal amino acid, Xaa-|-Yaa-, in which Xaa is preferably Leu, but may be other amino acids including Pro although not Arg or Lys, and Yaa may be Pro. Amino acid amides and methyl esters are also readily hydrolyzed, but rates on arylamides are exceedingly low.. It catalyses the reaction Release of an N-terminal amino acid, preferentially leucine, but not glutamic or aspartic acids.. Its function is as follows. Presumably involved in the processing and regular turnover of intracellular proteins. Catalyzes the removal of unsubstituted N-terminal amino acids from various peptides. This is Probable cytosol aminopeptidase from Acinetobacter baumannii (strain AB307-0294).